Reading from the N-terminus, the 74-residue chain is Large ribosomal subunit protein bL31 (74 aa).

4 residues coordinate Zn(2+): Cys-16, Cys-18, Cys-38, and Cys-41.

It belongs to the bacterial ribosomal protein bL31 family. Type A subfamily. In terms of assembly, part of the 50S ribosomal subunit. The cofactor is Zn(2+).

Functionally, binds the 23S rRNA. The protein is Large ribosomal subunit protein bL31 of Streptomyces griseus subsp. griseus (strain JCM 4626 / CBS 651.72 / NBRC 13350 / KCC S-0626 / ISP 5235).